The primary structure comprises 575 residues: Serine/threonine-protein kinase YPK1 (575 aa).

The interval 1–53 (MMSWKFGKKFKEGGFLSGKHHSSNNNSPSDTSRSTTPTPGNPHPEDAVKPPVP) is disordered. Low complexity predominate over residues 23–38 (SNNNSPSDTSRSTTPT). One can recognise a Protein kinase domain in the interval 245–500 (FELLKVIGKG…AQDIKNHPFF (256 aa)). ATP-binding positions include 251-259 (IGKGSFGKV) and Lys-274. Asp-368 (proton acceptor) is an active-site residue. The AGC-kinase C-terminal domain occupies 502 to 573 (KHINFTKLWN…SVSPLGESVG (72 aa)). Ser-543 and Ser-562 each carry phosphoserine.

This sequence belongs to the protein kinase superfamily. AGC Ser/Thr protein kinase family. RAC subfamily.

The enzyme catalyses L-seryl-[protein] + ATP = O-phospho-L-seryl-[protein] + ADP + H(+). It carries out the reaction L-threonyl-[protein] + ATP = O-phospho-L-threonyl-[protein] + ADP + H(+). Its function is as follows. Probable serine/threonine-protein kinase which may act in the sphingolipid-mediated signaling pathway. May act downstream of TORC2 (TOR complex 2) and PDK1 to regulate sphingolipid metabolism. In Cryptococcus neoformans var. grubii serotype A (strain H99 / ATCC 208821 / CBS 10515 / FGSC 9487) (Filobasidiella neoformans var. grubii), this protein is Serine/threonine-protein kinase YPK1.